The following is a 578-amino-acid chain: Zinc finger protein with KRAB and SCAN domains 8 (578 aa).

The tract at residues 1–20 (MAEESRKPSAPSPPDQTPEE) is disordered. The residue at position 12 (Ser12) is a Phosphoserine. Lys26 participates in a covalent cross-link: Glycyl lysine isopeptide (Lys-Gly) (interchain with G-Cter in SUMO2). Residues 51–133 (RLRFRQLRYQ…TLLEDLERQI (83 aa)) enclose the SCAN box domain. Positions 158–205 (ASAPEPPNTQLQSEATQHKSPVPQESQERAMSTSQSPTRSQKGSSGDQ) are disordered. The segment covering 165–205 (NTQLQSEATQHKSPVPQESQERAMSTSQSPTRSQKGSSGDQ) has biased composition (polar residues). Residues Lys176 and Lys199 each participate in a glycyl lysine isopeptide (Lys-Gly) (interchain with G-Cter in SUMO2) cross-link. A Phosphoserine modification is found at Ser201. The region spanning 220–316 (EKIEDMAVSL…GRLERQRGNP (97 aa)) is the KRAB domain. Glycyl lysine isopeptide (Lys-Gly) (interchain with G-Cter in SUMO2) cross-links involve residues Lys221, Lys272, and Lys288. C2H2-type zinc fingers lie at residues 322–344 (HKCDECGKSFAQSSGLVRHWRIH) and 350–372 (YQCNVCGKAFSYRSALLSHQDIH). Residues Lys374 and Lys376 each participate in a glycyl lysine isopeptide (Lys-Gly) (interchain with G-Cter in SUMO2) cross-link. 7 C2H2-type zinc fingers span residues 378–400 (YHCKECGKAFSQNTGLILHQRIH), 406–428 (YQCNQCGKAFSQSAGLILHQRIH), 434–456 (YECNECGKAFSHSSHLIGHQRIH), 462–484 (YECDECGKTFRRSSHLIGHQRSH), 490–512 (YKCNECGRAFSQKSGLIEHQRIH), 518–540 (YKCKECGKAFNGNTGLIQHLRIH), and 546–568 (YQCNECGKAFIQRSSLIRHQRIH). Residues Lys413 and Lys441 each participate in a glycyl lysine isopeptide (Lys-Gly) (interchain with G-Cter in SUMO2) cross-link. Lys502 is covalently cross-linked (Glycyl lysine isopeptide (Lys-Gly) (interchain with G-Cter in SUMO2)). A Glycyl lysine isopeptide (Lys-Gly) (interchain with G-Cter in SUMO2) cross-link involves residue Lys572.

Belongs to the krueppel C2H2-type zinc-finger protein family.

The protein localises to the nucleus. Functionally, may be involved in transcriptional regulation. The polypeptide is Zinc finger protein with KRAB and SCAN domains 8 (ZKSCAN8) (Homo sapiens (Human)).